We begin with the raw amino-acid sequence, 387 residues long: Small ribosomal subunit protein uS5m (387 aa).

Residues 1–22 constitute a mitochondrion transit peptide; the sequence is MLRSFSHFLQIGSRRQPTYFRC. Residues 33-87 form a disordered region; the sequence is FKNDPKKELNSNLNEKSVEESSKNETKEQFNSSSIPRESESEGKTASNTSPLSPK. The segment covering 48–60 has biased composition (basic and acidic residues); the sequence is KSVEESSKNETKE. Ser-85 carries the post-translational modification Phosphoserine. An S5 DRBM domain is found at 225–288; that stretch reads LMFVPLVRRR…GRAVKNMVYI (64 aa).

The protein belongs to the universal ribosomal protein uS5 family. Component of the mitochondrial small ribosomal subunit (mt-SSU). Mature yeast 74S mitochondrial ribosomes consist of a small (37S) and a large (54S) subunit. The 37S small subunit contains a 15S ribosomal RNA (15S mt-rRNA) and at least 32 different proteins. The 54S large subunit contains a 21S rRNA (21S mt-rRNA) and at least 45 different proteins. uS3m, uS4m and uS5m form the narrow entry site of the mRNA channel.

It is found in the mitochondrion. Component of the mitochondrial ribosome (mitoribosome), a dedicated translation machinery responsible for the synthesis of mitochondrial genome-encoded proteins, including at least some of the essential transmembrane subunits of the mitochondrial respiratory chain. The mitoribosomes are attached to the mitochondrial inner membrane and translation products are cotranslationally integrated into the membrane. The polypeptide is Small ribosomal subunit protein uS5m (mrp5) (Schizosaccharomyces pombe (strain 972 / ATCC 24843) (Fission yeast)).